The chain runs to 306 residues: Protein YIPF1 (306 aa).

Over 1-119 (MAAVDDLQFE…VRLYIRSNPD (119 aa)) the chain is Cytoplasmic. Residues 33-59 (PSVSFKHQPRPPGSLGREEDEELLGTN) are disordered. Positions 50-59 (EEDEELLGTN) are enriched in acidic residues. The helical transmembrane segment at 120-140 (LYGPFWICATLVFAIAISGNL) threads the bilayer. Residues 141–162 (SNFLIHLGEKTYHYVPEFQKVS) are Lumenal-facing. Residues 163–183 (IAATVIYAYAWLVPLALWGFL) form a helical membrane-spanning segment. Topologically, residues 184–200 (LWRNSKVMNIVSYSFLE) are cytoplasmic. The chain crosses the membrane as a helical span at residues 201–221 (IVCVYGYSLFIYIPTAVLWII). Over 222–227 (PQRVIR) the chain is Lumenal. The helical transmembrane segment at 228–248 (WVLVTIALGISGSVLAMTFWP) threads the bilayer. Residues 249–256 (AVREDNRR) are Cytoplasmic-facing. The chain crosses the membrane as a helical span at residues 257-277 (VALATIVTIMLLHVLLSVGCL). At 278-306 (AYFFDAPEMDHLPAAITTPNQTVAAAKSS) the chain is on the lumenal side. N297 carries N-linked (GlcNAc...) asparagine glycosylation.

It belongs to the YIP1 family. As to quaternary structure, interacts with YIPF6; this interaction may stabilize YIPF1. May also form a ternary complex with YIPF2 and YIPF6.

It is found in the golgi apparatus. The protein resides in the cis-Golgi network membrane. The protein localises to the trans-Golgi network membrane. Its subcellular location is the late endosome membrane. The protein is Protein YIPF1 (Yipf1) of Rattus norvegicus (Rat).